Reading from the N-terminus, the 141-residue chain is Small ribosomal subunit protein uS12 (141 aa).

It belongs to the universal ribosomal protein uS12 family. Part of the 30S ribosomal subunit.

Its function is as follows. With S4 and S5 plays an important role in translational accuracy. Located at the interface of the 30S and 50S subunits. The polypeptide is Small ribosomal subunit protein uS12 (Methanobrevibacter smithii (strain ATCC 35061 / DSM 861 / OCM 144 / PS)).